The following is a 196-amino-acid chain: MRVVYSVEEVEIPKGVSVSIERTGPFDYIVKVKGPLGEVTKEFKNTPVVMSLQDGKIVMEVFKARKREYAILGTYKGILKNMFLGVTRGWRYKLKVIYTHFPMLVKVQGNQLVIENFLGRKSKITLNIPKGVKVEVKGKEDIVIEGIDRELVSTFAAAVQAATELHGDERPSPHGREGGLGVVDGIYVVGYEHIKS.

The protein belongs to the universal ribosomal protein uL6 family. In terms of assembly, part of the 50S ribosomal subunit.

This protein binds to the 23S rRNA, and is important in its secondary structure. It is located near the subunit interface in the base of the L7/L12 stalk, and near the tRNA binding site of the peptidyltransferase center. In Pyrobaculum aerophilum (strain ATCC 51768 / DSM 7523 / JCM 9630 / CIP 104966 / NBRC 100827 / IM2), this protein is Large ribosomal subunit protein uL6.